Consider the following 207-residue polypeptide: Uracil phosphoribosyltransferase (207 aa).

Residues Arg77, Arg102, and 129-137 each bind 5-phospho-alpha-D-ribose 1-diphosphate; that span reads DPMLATGVS. Uracil-binding positions include Ile192 and 197–199; that span reads GDA. Residue Asp198 participates in 5-phospho-alpha-D-ribose 1-diphosphate binding.

It belongs to the UPRTase family. Mg(2+) is required as a cofactor.

The catalysed reaction is UMP + diphosphate = 5-phospho-alpha-D-ribose 1-diphosphate + uracil. The protein operates within pyrimidine metabolism; UMP biosynthesis via salvage pathway; UMP from uracil: step 1/1. Its activity is regulated as follows. Allosterically activated by GTP. Functionally, catalyzes the conversion of uracil and 5-phospho-alpha-D-ribose 1-diphosphate (PRPP) to UMP and diphosphate. This Fervidobacterium nodosum (strain ATCC 35602 / DSM 5306 / Rt17-B1) protein is Uracil phosphoribosyltransferase.